The chain runs to 330 residues: tRNA-modifying protein YgfZ (330 aa).

Folate is bound by residues Trp28 and Trp190.

The protein belongs to the tRNA-modifying YgfZ family.

The protein localises to the cytoplasm. Folate-binding protein involved in regulating the level of ATP-DnaA and in the modification of some tRNAs. It is probably a key factor in regulatory networks that act via tRNA modification, such as initiation of chromosomal replication. The polypeptide is tRNA-modifying protein YgfZ (Serratia proteamaculans (strain 568)).